The sequence spans 191 residues: Glutathione-dependent formaldehyde-activating enzyme (191 aa).

A CENP-V/GFA domain is found at 22-169 (FAGGTLQCLC…LTELGLTPYD (148 aa)). Zn(2+) contacts are provided by C29, C31, C50, C52, C55, C97, and C100.

The protein belongs to the Gfa family. Zn(2+) serves as cofactor.

The catalysed reaction is S-(hydroxymethyl)glutathione = glutathione + formaldehyde. Its pathway is one-carbon metabolism; formaldehyde degradation; formate from formaldehyde (glutathione route): step 1/3. Functionally, catalyzes the condensation of formaldehyde and glutathione to S-hydroxymethylglutathione. The sequence is that of Glutathione-dependent formaldehyde-activating enzyme from Xanthomonas campestris pv. campestris (strain B100).